Consider the following 183-residue polypeptide: Large ribosomal subunit protein uL5 (183 aa).

It belongs to the universal ribosomal protein uL5 family. In terms of assembly, part of the 50S ribosomal subunit; part of the 5S rRNA/L5/L18/L25 subcomplex. Contacts the 5S rRNA and the P site tRNA. Forms a bridge to the 30S subunit in the 70S ribosome.

Functionally, this is one of the proteins that bind and probably mediate the attachment of the 5S RNA into the large ribosomal subunit, where it forms part of the central protuberance. In the 70S ribosome it contacts protein S13 of the 30S subunit (bridge B1b), connecting the 2 subunits; this bridge is implicated in subunit movement. Contacts the P site tRNA; the 5S rRNA and some of its associated proteins might help stabilize positioning of ribosome-bound tRNAs. The sequence is that of Large ribosomal subunit protein uL5 from Kosmotoga olearia (strain ATCC BAA-1733 / DSM 21960 / TBF 19.5.1).